A 583-amino-acid polypeptide reads, in one-letter code: Sensor protein SrrB (583 aa).

The Cytoplasmic portion of the chain corresponds to 1-11; it reads MMSRLNSVVIK. Residues 12 to 32 form a helical membrane-spanning segment; that stretch reads LWLTIILIVTTVLILLSIALI. Topologically, residues 33-174 are extracellular; that stretch reads TFMQYYFTQE…SIEDTNNAIT (142 aa). Residues 175 to 195 traverse the membrane as a helical segment; sequence IITIITAVIFLTITTVFAFFL. Over 196–583 the chain is Cytoplasmic; the sequence is SSRITKPLRR…TFIIKLPKPE (388 aa). An HAMP domain is found at 197–249; it reads SRITKPLRRLRDQATRVSEGDYSYKPSVTTKDEIGQLSQAFNQMSTEIEEHVD. Residues 366–583 form the Histidine kinase domain; that stretch reads NVSHELRTPI…TFIIKLPKPE (218 aa). Histidine 369 carries the post-translational modification Phosphohistidine; by autocatalysis.

It localises to the cell membrane. It catalyses the reaction ATP + protein L-histidine = ADP + protein N-phospho-L-histidine.. Member of the two-component regulatory system SrrA/SrrB, which is involved in the global regulation of staphylococcal virulence factors in response to environmental oxygen levels as well as biofilm formation. Also plays an essential role in host-derived nitric oxide resistance by regulating hmp/flavohemoglobin, an enzyme that detoxifies nitric oxide by converting it to nitrate. Functions as a sensor protein kinase which is autophosphorylated at a histidine residue and transfers its phosphate group to SrrA. In turn, SrrA binds to the upstream promoter regions of the target genes to positively and negatively regulate their expression. This Staphylococcus aureus (strain MW2) protein is Sensor protein SrrB (srrB).